We begin with the raw amino-acid sequence, 555 residues long: Neutral amino acid transporter B(0) (555 aa).

An N-acetylmethionine modification is found at Met1. Topologically, residues 1–52 (MAVDPPKADPKGVVAVDPTANCGSGLKSREDQGAKAGGCCSSRDQVCRCLRA) are cytoplasmic. Residues 53 to 82 (NLLVLLTVAAAVAGVVLGLGVSAAGGAEAL) traverse the membrane as a helical segment. Topologically, residues 83–95 (GHARFTAFAFPGE) are extracellular. A helical transmembrane segment spans residues 96 to 117 (LLLRLLEMIILPLVVCSLIGGA). Residues 118–131 (ASLDPSALGRLGAW) are Cytoplasmic-facing. Residues 132–154 (ALLFFLVTTLLSSALGVALALAL) form a helical membrane-spanning segment. The Extracellular segment spans residues 155-239 (KPGAAFAAIN…SNATMDQPHC (85 aa)). Residues Asn164 and Asn231 are each glycosylated (N-linked (GlcNAc...) asparagine). Residues 240 to 262 (EMKMNILGLVVFAIVFGVALRKL) form a helical membrane-spanning segment. At 263 to 271 (GPEGELLIR) the chain is on the cytoplasmic side. The helical transmembrane segment at 272–299 (FFNSFNDATMVLVSWIMWYAPIGILFLV) threads the bilayer. At 300–320 (AGKIVEMKDIRQLFIGLGKYI) the chain is on the extracellular side. Residues 321–342 (VCCLLGHAIHGLLVLPLIYFLF) traverse the membrane as a helical segment. Residues 343–347 (TRKNP) lie on the Cytoplasmic side of the membrane. An intramembrane region (discontinuously helical) is located at residues 348–378 (YRFLWGIVTPLATAFGTSSSSATLPLMMKCV). Residues 379-387 (EEKNGVAKH) are Cytoplasmic-facing. The chain crosses the membrane as a helical span at residues 388 to 414 (ISRFILPIGATVNMDGAALFQCVAAVF). Na(+)-binding residues include Gly396, Thr398, and Asn400. Residues 415-427 (IAQLNGMSLDFVK) lie on the Extracellular side of the membrane. Positions 428-461 (IITILVTATASSVGAAGIPAGGVLTLAIILEAIS) form an intramembrane region, discontinuously helical. Over 462–474 (LPVKDISLILAVD) the chain is Extracellular. Residues 475–496 (WLVDRSCTVLNVEGDAFGAGLL) traverse the membrane as a helical segment. Residues Asn485 and Asp489 each contribute to the Na(+) site. At 497–555 (QSYVDRTKMPSSEPELIQVKNDVSLKPLPLATEEGNPLLKQCREPSGDSSATCEKESVM) the chain is on the cytoplasmic side. Phosphoserine occurs at positions 507, 508, 520, 545, and 553. Residues 534-555 (LLKQCREPSGDSSATCEKESVM) are disordered.

It belongs to the dicarboxylate/amino acid:cation symporter (DAACS) (TC 2.A.23) family. In terms of assembly, homotrimer.

The protein localises to the cell membrane. It is found in the melanosome. It catalyses the reaction L-glutamine(out) + L-serine(in) + Na(+)(out) = L-glutamine(in) + L-serine(out) + Na(+)(in). The enzyme catalyses L-glutamine(in) + L-serine(out) + Na(+)(out) = L-glutamine(out) + L-serine(in) + Na(+)(in). The catalysed reaction is L-threonine(in) + L-glutamine(out) + Na(+)(out) = L-threonine(out) + L-glutamine(in) + Na(+)(in). It carries out the reaction L-threonine(out) + L-glutamine(in) + Na(+)(out) = L-threonine(in) + L-glutamine(out) + Na(+)(in). It catalyses the reaction L-asparagine(in) + L-glutamine(out) + Na(+)(out) = L-asparagine(out) + L-glutamine(in) + Na(+)(in). The enzyme catalyses L-asparagine(out) + L-glutamine(in) + Na(+)(out) = L-asparagine(in) + L-glutamine(out) + Na(+)(in). The catalysed reaction is L-glutamine(in) + L-alanine(out) + Na(+)(out) = L-glutamine(out) + L-alanine(in) + Na(+)(in). It carries out the reaction L-valine(out) + L-glutamine(in) + Na(+)(out) = L-valine(in) + L-glutamine(out) + Na(+)(in). It catalyses the reaction L-glutamine(in) + L-methionine(out) + Na(+)(out) = L-glutamine(out) + L-methionine(in) + Na(+)(in). The enzyme catalyses L-glutamine(in) + L-glutamate(out) + Na(+)(out) + H(+)(out) = L-glutamine(out) + L-glutamate(in) + Na(+)(in) + H(+)(in). The catalysed reaction is D-serine(in) + L-glutamine(out) + Na(+)(out) = D-serine(out) + L-glutamine(in) + Na(+)(in). It carries out the reaction D-serine(in) + L-alanine(out) + Na(+)(out) = D-serine(out) + L-alanine(in) + Na(+)(in). It catalyses the reaction nitrate(in) = nitrate(out). The enzyme catalyses iodide(out) = iodide(in). The catalysed reaction is thiocyanate(in) = thiocyanate(out). Its activity is regulated as follows. Down-regulated at acidic pH. In terms of biological role, sodium-coupled antiporter of neutral amino acids. In a tri-substrate transport cycle, exchanges neutral amino acids between the extracellular and intracellular compartments, coupled to the inward cotransport of at least one sodium ion. The preferred substrate is the essential amino acid L-glutamine, a precursor for biosynthesis of proteins, nucleotides and amine sugars as well as an alternative fuel for mitochondrial oxidative phosphorylation. Exchanges L-glutamine with other neutral amino acids such as L-serine, L-threonine and L-asparagine in a bidirectional way. Provides L-glutamine to proliferating stem and activated cells driving the metabolic switch toward cell differentiation. The transport cycle is usually pH-independent, with the exception of L-glutamate. Transports extracellular L-glutamate coupled to the cotransport of one proton and one sodium ion in exchange for intracellular L-glutamine counter-ion. May provide for L-glutamate uptake in glial cells regulating glutamine/glutamate cycle in the nervous system. Can transport D-amino acids. Mediates D-serine release from the retinal glia potentially affecting NMDA receptor function in retinal neurons. Displays sodium- and amino acid-dependent but uncoupled channel-like anion conductance with a preference SCN(-) &gt;&gt; NO3(-) &gt; I(-) &gt; Cl(-). Through binding of the fusogenic protein syncytin-1/ERVW-1 may mediate trophoblasts syncytialization, the spontaneous fusion of their plasma membranes, an essential process in placental development. The sequence is that of Neutral amino acid transporter B(0) (Slc1a5) from Rattus norvegicus (Rat).